The chain runs to 350 residues: Phosphotriesterase-related protein (350 aa).

A divalent metal cation contacts are provided by His-22, His-24, Glu-169, His-201, His-230, and Asp-298.

The protein belongs to the metallo-dependent hydrolases superfamily. Phosphotriesterase family. The cofactor is a divalent metal cation.

In Drosophila yakuba (Fruit fly), this protein is Phosphotriesterase-related protein.